The sequence spans 277 residues: MDIALLIKAAIMGVVEGLTEFLPISSTGHLILAGALLGFDDDKAKVFDIAIQTGAIFAVILVYWQKIRDTLVALPTEKQAQQFALNVLVAFVPAVVLGLLFGKAIQAHLFTPVVVASTFVIGGFIILWAEKRQERNPAVARIHEVEAMTVMDALKVGLVQCLAMIPGTSRSGATIIGGMLLGLSRKAATDFSFYLAIPTLIGAGVYSLYKERALLSVADVPLFMVGLVFSFVSAWLCIRWLLRYISSHSFIPFAWYRIAFGVVVLATAWSGVVTWTP.

The next 7 membrane-spanning stretches (helical) occupy residues 3 to 23, 44 to 64, 82 to 102, 109 to 129, 188 to 208, 218 to 238, and 249 to 269; these read IALL…EFLP, AKVF…LVYW, QFAL…LLFG, LFTP…ILWA, ATDF…VYSL, ADVP…WLCI, and SFIP…ATAW.

The protein belongs to the UppP family.

Its subcellular location is the cell inner membrane. The enzyme catalyses di-trans,octa-cis-undecaprenyl diphosphate + H2O = di-trans,octa-cis-undecaprenyl phosphate + phosphate + H(+). Functionally, catalyzes the dephosphorylation of undecaprenyl diphosphate (UPP). Confers resistance to bacitracin. In Polaromonas sp. (strain JS666 / ATCC BAA-500), this protein is Undecaprenyl-diphosphatase.